Reading from the N-terminus, the 133-residue chain is Acyl-CoA thioester hydrolase YciA (133 aa).

Residues 8-123 (PQGELVLRTL…LFIYVAVDPD (116 aa)) enclose the HotDog ACOT-type domain.

This sequence belongs to the acyl coenzyme A hydrolase family.

Functionally, catalyzes the hydrolysis of the thioester bond in palmitoyl-CoA and malonyl-CoA. In Salmonella typhi, this protein is Acyl-CoA thioester hydrolase YciA (yciA).